Consider the following 189-residue polypeptide: dCTP deaminase (189 aa).

Residues 112–117, 136–138, Gln-157, Tyr-171, and Gln-181 each bind dCTP; these read KSTYAR and TLE. Glu-138 acts as the Proton donor/acceptor in catalysis.

This sequence belongs to the dCTP deaminase family. In terms of assembly, homotrimer.

The catalysed reaction is dCTP + H2O + H(+) = dUTP + NH4(+). The protein operates within pyrimidine metabolism; dUMP biosynthesis; dUMP from dCTP (dUTP route): step 1/2. In terms of biological role, catalyzes the deamination of dCTP to dUTP. This is dCTP deaminase from Burkholderia orbicola (strain MC0-3).